Reading from the N-terminus, the 290-residue chain is Aquaporin PIP2-1 (290 aa).

Positions 1 to 20 (MGKDDVIESGAGGGEFAAKD) are disordered. The next 2 membrane-spanning stretches (helical) occupy residues 43–63 (AVIA…ATVI) and 80–100 (CGGV…FVLV). An NPA 1 motif is present at residues 112 to 114 (NPA). 3 consecutive transmembrane segments (helical) span residues 131-151 (LLYI…VKAF), 173-193 (GTGL…VFSA), and 205-225 (VPVL…LATI). The short motif at 233–235 (NPA) is the NPA 2 element. The chain crosses the membrane as a helical span at residues 255–275 (IFWVGPLVGAAIAAFYHQYIL).

Belongs to the MIP/aquaporin (TC 1.A.8) family. PIP (TC 1.A.8.11) subfamily. Homomers. Can interact with PIP1-2 to form heteromers. In terms of tissue distribution, expressed in roots.

It is found in the cell membrane. Functionally, water channel required to facilitate the transport of water across cell membrane. Active as homomers. Increased activity when heteromerization with PIP1-2. The sequence is that of Aquaporin PIP2-1 (PIP2-1) from Zea mays (Maize).